A 308-amino-acid chain; its full sequence is Methionine synthase (308 aa).

Zn(2+) contacts are provided by H192, C194, E215, and C282.

Belongs to the archaeal MetE family. Zn(2+) serves as cofactor.

The protein operates within amino-acid biosynthesis; L-methionine biosynthesis via de novo pathway. Its function is as follows. Catalyzes the transfer of a methyl group to L-homocysteine resulting in methionine formation. Can use methylcobalamin and methylcobinamide as methyl donors, but methylcobalamin is not considered to be the physiological substrate. This Methanocaldococcus jannaschii (strain ATCC 43067 / DSM 2661 / JAL-1 / JCM 10045 / NBRC 100440) (Methanococcus jannaschii) protein is Methionine synthase.